Consider the following 1124-residue polypeptide: Phytochrome A1 (1124 aa).

The span at 1 to 14 (MSSSRPSQSSTTSA) shows a compositional bias: low complexity. The disordered stretch occupies residues 1 to 20 (MSSSRPSQSSTTSARSKHSA). The 184-residue stretch at 218–401 (SMERLCDTMV…VFAIHVNKEL (184 aa)) folds into the GAF domain. Cys-323 contributes to the phytochromobilin binding site. Positions 617-687 (VTAEMVRLIE…KMLELALQGK (71 aa)) constitute a PAS 1 domain. The PAC domain maps to 690–746 (RNVEFEIKTHGPSGDSSPISLIVNACASRDVGDSVVGVCFIAQDITGQKNIMDKFTR). Residues 747–821 (IEGDYRAIIQ…KNQEAFVNFG (75 aa)) form the PAS 2 domain. The Histidine kinase domain occupies 901–1118 (YIRRQIRNPL…TFIISVELAV (218 aa)).

Belongs to the phytochrome family. As to quaternary structure, homodimer. Contains one covalently linked phytochromobilin chromophore.

Functionally, regulatory photoreceptor which exists in two forms that are reversibly interconvertible by light: the Pr form that absorbs maximally in the red region of the spectrum and the Pfr form that absorbs maximally in the far-red region. Photoconversion of Pr to Pfr induces an array of morphogenic responses, whereas reconversion of Pfr to Pr cancels the induction of those responses. Pfr controls the expression of a number of nuclear genes including those encoding the small subunit of ribulose-bisphosphate carboxylase, chlorophyll A/B binding protein, protochlorophyllide reductase, rRNA, etc. It also controls the expression of its own gene(s) in a negative feedback fashion. This is Phytochrome A1 (PHYA1) from Nicotiana tabacum (Common tobacco).